We begin with the raw amino-acid sequence, 599 residues long: Putative fused cobalt transport protein CbiMQ (599 aa).

A cbiM region spans residues 1–239 (MHIMEGFLPS…LLPSSDQNLS (239 aa)). 16 consecutive transmembrane segments (helical) span residues 12–32 (WWQF…AALI), 44–64 (LLGL…PSVG), 74–94 (FGAI…VLVF), 106–126 (TLGA…CIIF), 140–160 (SFSV…YMMT), 162–182 (LQLA…FVVY), 183–203 (LGIF…LIVL), 247–267 (IIAG…LAGL), 303–323 (WLFA…LYLL), 356–376 (QVSA…GVTS), 377–397 (PLPY…LIIA), 407–427 (LLTI…LITG), 438–458 (IGAF…LVLS), 463–483 (GMCS…FSVL), 493–513 (IDLS…AIAI), and 579–599 (MAVF…MLLL). The cbiQ stretch occupies residues 341–599 (DEHILDDVAI…GLLCAEMLLL (259 aa)).

In the N-terminal section; belongs to the CbiM family. This sequence in the C-terminal section; belongs to the CbiQ family. In terms of assembly, forms an energy-coupling factor (ECF) transporter complex composed of an ATP-binding protein (A component, CbiO), a transmembrane protein (T component, CbiQ) and 2 possible substrate-capture proteins (S components, CbiM and CbiN) of unknown stoichimetry.

Its subcellular location is the cell membrane. It functions in the pathway cofactor biosynthesis; adenosylcobalamin biosynthesis. Part of the energy-coupling factor (ECF) transporter complex CbiMNOQ involved in cobalt import. In Methanocorpusculum labreanum (strain ATCC 43576 / DSM 4855 / Z), this protein is Putative fused cobalt transport protein CbiMQ (cbiMQ).